The following is a 289-amino-acid chain: Rhomboid-type serine protease 2 (289 aa).

6 helical membrane passes run 26 to 46, 67 to 87, 100 to 120, 122 to 142, 157 to 179, and 184 to 203; these read VVII…VDIQ, FPFI…LTPL, CLAL…IGLE, FVFG…LLLG, IGTY…AVLV, and FWGH…SSTL. The Nucleophile role is filled by Ser134. His187 is a catalytic residue.

This sequence belongs to the peptidase S54 family.

The protein localises to the golgi apparatus membrane. It is found in the golgi apparatus. Its subcellular location is the cis-Golgi network membrane. It catalyses the reaction Cleaves type-1 transmembrane domains using a catalytic dyad composed of serine and histidine that are contributed by different transmembrane domains.. Its function is as follows. Probable rhomboid-type serine protease that catalyzes intramembrane proteolysis. The chain is Rhomboid-type serine protease 2 (RBD2) from Podospora anserina (Pleurage anserina).